Reading from the N-terminus, the 338-residue chain is Delta(9)-fatty-acid desaturase fat-7 (338 aa).

4 helical membrane passes run 51 to 71, 76 to 96, 194 to 214, and 218 to 238; these read VALF…LVFH, TAVF…AGAH, YFPL…VYFW, and AFIA…HATW.

The protein belongs to the fatty acid desaturase type 1 family. As to expression, expressed in the intestine in adult worms and in all four larval stages.

Its subcellular location is the membrane. It catalyses the reaction octadecanoyl-CoA + 2 Fe(II)-[cytochrome b5] + O2 + 2 H(+) = (9Z)-octadecenoyl-CoA + 2 Fe(III)-[cytochrome b5] + 2 H2O. The catalysed reaction is hexadecanoyl-CoA + 2 Fe(II)-[cytochrome b5] + O2 + 2 H(+) = (9Z)-hexadecenoyl-CoA + 2 Fe(III)-[cytochrome b5] + 2 H2O. The enzyme catalyses heptadecanoyl-CoA + 2 Fe(II)-[cytochrome b5] + O2 + 2 H(+) = (9Z)-heptadecenoyl-CoA + 2 Fe(III)-[cytochrome b5] + 2 H2O. It carries out the reaction (11E)-octadecenoyl-CoA + 2 Fe(II)-[cytochrome b5] + O2 + 2 H(+) = (9Z,11E)-octadecadienoyl-CoA + 2 Fe(III)-[cytochrome b5] + 2 H2O. The protein operates within lipid metabolism; monounsaturated fatty acid biosynthesis. It participates in lipid metabolism; fatty acid metabolism. Its function is as follows. Delta(9)-fatty acid desaturase that acts preferentially on stearoyl-CoA (octadecanoyl-CoA) producing the monounsaturated oleoyl-CoA ((9Z)-octadecenoyl-CoA), one of the most abundant monounsaturated fatty acid in Caenorhabditis elegans phospholipids and triacylglycerols. Also acts on palmitoyl-CoA (hexadecanoyl-CoA), heptadecanoyl-CoA and (11E)-octadecenoyl-CoA (trans-vaccenoyl-CoA), the monounsaturated fatty acids (MUFAs) produced are further used by several other desaturases and elongases as substrates to synthesize polyunsaturated fatty acids (PUFAs) endogenously (PUFAs are essential for membrane structure and many cellular and physiological processes). Unlike plants, Caenorhabditis elegans desaturases seem to use fatty acyl-CoAs as substrates. Partially inhibits expression of genes involved in beta-oxidation, such as ech-1 and acs-2, perhaps signaling via the actions of one of its fatty acid products. May form part of a negative feedback loop with the transcription factor nhr-49 to limit beta-oxidation, in which nhr-49 stimulates expression of fat-7 and acs-2, and in turn fat-7 indirectly inhibits acs-2 and other genes also involved in beta-oxidation. The sequence is that of Delta(9)-fatty-acid desaturase fat-7 (fat-7) from Caenorhabditis elegans.